Reading from the N-terminus, the 335-residue chain is Phospho-N-acetylmuramoyl-pentapeptide-transferase (335 aa).

The next 10 helical transmembrane spans lie at 5–25, 50–70, 78–98, 114–133, 145–165, 177–197, 200–220, 236–256, 262–282, and 311–331; these read IFLA…LMIP, TPTM…LIMA, MVMV…DDFI, LIGQ…RYLG, IHLE…VGIT, LAAG…TLAA, GGGV…AAAV, VFMG…LAVL, ILLI…LQVF, and VVMV…IAYM.

The protein belongs to the glycosyltransferase 4 family. MraY subfamily. Mg(2+) is required as a cofactor.

The protein resides in the cell membrane. The enzyme catalyses UDP-N-acetyl-alpha-D-muramoyl-L-alanyl-gamma-D-glutamyl-meso-2,6-diaminopimeloyl-D-alanyl-D-alanine + di-trans,octa-cis-undecaprenyl phosphate = di-trans,octa-cis-undecaprenyl diphospho-N-acetyl-alpha-D-muramoyl-L-alanyl-D-glutamyl-meso-2,6-diaminopimeloyl-D-alanyl-D-alanine + UMP. Its pathway is cell wall biogenesis; peptidoglycan biosynthesis. In terms of biological role, catalyzes the initial step of the lipid cycle reactions in the biosynthesis of the cell wall peptidoglycan: transfers peptidoglycan precursor phospho-MurNAc-pentapeptide from UDP-MurNAc-pentapeptide onto the lipid carrier undecaprenyl phosphate, yielding undecaprenyl-pyrophosphoryl-MurNAc-pentapeptide, known as lipid I. The sequence is that of Phospho-N-acetylmuramoyl-pentapeptide-transferase from Desulfitobacterium hafniense (strain DSM 10664 / DCB-2).